The following is a 315-amino-acid chain: Methionyl-tRNA formyltransferase (315 aa).

Position 113–116 (113–116) interacts with (6S)-5,6,7,8-tetrahydrofolate; that stretch reads SILP.

It belongs to the Fmt family.

The catalysed reaction is L-methionyl-tRNA(fMet) + (6R)-10-formyltetrahydrofolate = N-formyl-L-methionyl-tRNA(fMet) + (6S)-5,6,7,8-tetrahydrofolate + H(+). Its function is as follows. Attaches a formyl group to the free amino group of methionyl-tRNA(fMet). The formyl group appears to play a dual role in the initiator identity of N-formylmethionyl-tRNA by promoting its recognition by IF2 and preventing the misappropriation of this tRNA by the elongation apparatus. The sequence is that of Methionyl-tRNA formyltransferase from Vibrio cholerae serotype O1 (strain M66-2).